We begin with the raw amino-acid sequence, 233 residues long: Antiholin-like protein LrgB (233 aa).

Transmembrane regions (helical) follow at residues 5-25 (LGINTPYFGILVSLIPFVIAT), 33-53 (GFFLLAPLFVSMVAGIAFLKL), 63-83 (IGGDIINFFLEPATICFAIPL), 97-117 (IFGGIAVGTIIALLLIYLVAI), 152-172 (LTSLAVILNAVVISALGAKIV), and 212-232 (IAVVIVGVIVVAVVPILAPIL).

It belongs to the CidB/LrgB family. LrgB subfamily.

The protein localises to the cell membrane. Its function is as follows. Inhibits the expression or activity of extracellular murein hydrolases by interacting, possibly with LrgA, with the holin-like proteins CidA and/or CidB. The LrgAB and CidAB proteins may affect the proton motive force of the membrane. May be involved in programmed cell death (PCD), possibly triggering PCD in response to antibiotics and environmental stresses. The chain is Antiholin-like protein LrgB from Staphylococcus epidermidis (strain ATCC 35984 / DSM 28319 / BCRC 17069 / CCUG 31568 / BM 3577 / RP62A).